The chain runs to 257 residues: UPF0246 protein Ping_3037 (257 aa).

Belongs to the UPF0246 family.

The protein is UPF0246 protein Ping_3037 of Psychromonas ingrahamii (strain DSM 17664 / CCUG 51855 / 37).